The sequence spans 509 residues: ATP synthase subunit alpha (509 aa).

169–176 contacts ATP; that stretch reads GDRQTGKT.

Belongs to the ATPase alpha/beta chains family. As to quaternary structure, F-type ATPases have 2 components, CF(1) - the catalytic core - and CF(0) - the membrane proton channel. CF(1) has five subunits: alpha(3), beta(3), gamma(1), delta(1), epsilon(1). CF(0) has three main subunits: a(1), b(2) and c(9-12). The alpha and beta chains form an alternating ring which encloses part of the gamma chain. CF(1) is attached to CF(0) by a central stalk formed by the gamma and epsilon chains, while a peripheral stalk is formed by the delta and b chains.

It is found in the cell inner membrane. The enzyme catalyses ATP + H2O + 4 H(+)(in) = ADP + phosphate + 5 H(+)(out). Functionally, produces ATP from ADP in the presence of a proton gradient across the membrane. The alpha chain is a regulatory subunit. This Brucella ovis (strain ATCC 25840 / 63/290 / NCTC 10512) protein is ATP synthase subunit alpha.